Here is a 170-residue protein sequence, read N- to C-terminus: dCTP pyrophosphatase 1 (170 aa).

The interval 1 to 25 (MSTAGDGERGTVGQEDSAAARPFRF) is disordered. Residue Ser-2 is modified to N-acetylserine. Position 2 is a phosphoserine (Ser-2). Residues His-38 and 47 to 51 (WEQFH) each bind substrate. 2 residues coordinate Mg(2+): Glu-63 and Glu-66. Trp-73 contributes to the substrate binding site. 2 residues coordinate Mg(2+): Glu-95 and Asp-98. Tyr-102 serves as a coordination point for substrate. Residues 150-170 (SENQAVGAGDPASELRDQAST) form a disordered region.

In terms of assembly, homotetramer. Mg(2+) is required as a cofactor. In terms of tissue distribution, ubiquitous. Highly expressed in heart, liver, skeletal muscle, cerebellum, brain, and salivary gland.

It localises to the cytoplasm. The protein localises to the cytosol. The enzyme catalyses dCTP + H2O = dCMP + diphosphate + H(+). Its activity is regulated as follows. Inhibited by divalent calcium or cadmium ions. Functionally, hydrolyzes deoxynucleoside triphosphates (dNTPs) to the corresponding nucleoside monophosphates. Has a strong preference for dCTP and its analogs including 5-iodo-dCTP and 5-methyl-dCTP for which it may even have a higher efficiency. May protect DNA or RNA against the incorporation of these genotoxic nucleotide analogs through their catabolism. This Mus musculus (Mouse) protein is dCTP pyrophosphatase 1.